The primary structure comprises 1023 residues: Sodium/potassium-transporting ATPase subunit alpha-1 (1023 aa).

A propeptide spanning residues Met1–Val5 is cleaved from the precursor. Residues Met1–Glu11 show a composition bias toward basic and acidic residues. Residues Met1–Glu38 are disordered. The Cytoplasmic segment spans residues Gly6 to Pro87. N6-acetyllysine is present on Lys9. Tyr10 carries the phosphotyrosine modification. At Ser16 the chain carries Phosphoserine; by PKC. At Lys21 the chain carries N6-acetyllysine. The residue at position 23 (Ser23) is a Phosphoserine; by PKC. Over residues Lys28–Glu38 the composition is skewed to basic and acidic residues. Residues Ser40 and Ser47 each carry the phosphoserine modification. Residues Pro82–Pro84 form a phosphoinositide-3 kinase binding region. Residues Glu88–Ala108 traverse the membrane as a helical segment. Residues Ile109 to Tyr131 are Extracellular-facing. The helical transmembrane segment at Leu132–Ala152 threads the bilayer. Topologically, residues Lys153–Ile288 are cytoplasmic. Positions Ser216–Asn235 are disordered. Ser228 carries the phosphoserine modification. At Tyr260 the chain carries Phosphotyrosine. A helical membrane pass occupies residues Glu289–Ile308. At Leu309 to Ala320 the chain is on the extracellular side. A helical transmembrane segment spans residues Val321–Ala338. The Cytoplasmic portion of the chain corresponds to Thr339 to Leu772. Asp376 functions as the 4-aspartylphosphate intermediate in the catalytic mechanism. Phosphoserine occurs at positions 452 and 484. Lys487 lines the ATP pocket. Position 542 is a phosphotyrosine (Tyr542). Residues Arg596–Asp717 form a mediates interaction with SCN7A region. Lys661 is modified (N6-succinyllysine). Phosphoserine occurs at positions 668 and 675. Residues Asp717 and Asp721 each contribute to the Mg(2+) site. The helical transmembrane segment at Lys773–Ile792 threads the bilayer. The Extracellular portion of the chain corresponds to Phe793 to Leu802. A helical transmembrane segment spans residues Gly803 to Ala823. At Tyr824–Lys843 the chain is on the cytoplasmic side. The helical transmembrane segment at Leu844 to Phe866 threads the bilayer. The Extracellular portion of the chain corresponds to Phe867–Cys918. Residues His919–Lys938 form a helical membrane-spanning segment. At Thr939 to Asn951 the chain is on the cytoplasmic side. Position 943 is a phosphoserine; by PKA (Ser943). A helical membrane pass occupies residues Lys952 to Tyr970. The Extracellular segment spans residues Cys971–Pro985. Residues Thr986–Lys1006 form a helical membrane-spanning segment. Topologically, residues Leu1007 to Tyr1023 are cytoplasmic.

It belongs to the cation transport ATPase (P-type) (TC 3.A.3) family. Type IIC subfamily. In terms of assembly, the sodium/potassium-transporting ATPase is composed of a catalytic alpha subunit, an auxiliary non-catalytic beta subunit and an additional regulatory subunit. Interacts with regulatory subunit FXYD1. Interacts with regulatory subunit FXYD3. Interacts with SLC35G1 and STIM1. Interacts with SIK1. Interacts with CLN3; this interaction regulates the sodium/potassium-transporting ATPase complex localization at the plasma membrane. Interacts with SCN7A; activates ATP1A1 P-type sodium:potassium-exchanging transporter activity which indirectly signals to nearby neurons to regulate sodium homeostasis. Phosphorylation on Tyr-10 modulates pumping activity. Phosphorylation of Ser-943 by PKA modulates the response of ATP1A1 to PKC. Dephosphorylation by protein phosphatase 2A (PP2A) following increases in intracellular sodium, leading to increase catalytic activity. Expressed in the central nervous system, in most motor and sensory axons of the ventral and dorsal roots, as well as in the large motor neurons of the ventral horn (at protein level).

It localises to the cell membrane. It is found in the basolateral cell membrane. The protein localises to the sarcolemma. Its subcellular location is the cell projection. The protein resides in the axon. It localises to the melanosome. It catalyses the reaction K(+)(out) + Na(+)(in) + ATP + H2O = K(+)(in) + Na(+)(out) + ADP + phosphate + H(+). In terms of biological role, this is the catalytic component of the active enzyme, which catalyzes the hydrolysis of ATP coupled with the exchange of sodium and potassium ions across the plasma membrane. This action creates the electrochemical gradient of sodium and potassium ions, providing the energy for active transport of various nutrients. Could also be part of an osmosensory signaling pathway that senses body-fluid sodium levels and controls salt intake behavior as well as voluntary water intake to regulate sodium homeostasis. The sequence is that of Sodium/potassium-transporting ATPase subunit alpha-1 (Atp1a1) from Rattus norvegicus (Rat).